The primary structure comprises 816 residues: MGTNRPRPRTKDFFAAPALSLTLAGVFGRKNGPAASGGDGVEEGDEEVQAAGEAAVEISSENAGPGCRQSQSGGGSGEDGGHDDDDGEGSNKKRRRKNYHRHTAEQIRIMEALFKESPHPDERQRQQVSKQLGLSARQVKFWFQNRRTQIKAVQERHENSLLKSELEKLQDEHRAMRELAKKPSRCLNCGVVATSSDAAAAATAADTREQRLRLEKAKLKAEVCMPPPRSRARPFRCATLQDTDSGELAMLNLFQIERLRGTPGKSAADGIASPPCSASAGAMQTNSRSPPLHDHDGGFLRHDDDKPRILELATRALDELVGMCSSGEPVWVRGVETGRDILNYDEYVRLFRRDHGGSGDQMAGWTVEASRECGLVYLDTMHLVHTFMDVDKWKDLFPTMISKAATLEMISNREDDGRDGVLQLMYAELQTLTPMVPTRELYFARYCKKLAAERWAIVDVSFDESETGVHASSAVRCWKNPSGCLIEEQNNGRCKMTWVEHTRCRRCTVAPLYRAVTASGVAFGARRWVAALQLQCERMVFAVATNVPTRDSTGVSTLAGRRSVLKLAHRMTSSLCRTTGGSCDMAWRRAPKGGSGGGGDDDIWLTSRENAGDDPGEPQGLIACAAASTWLPVNPTALLDLLRDESRRPEWDVMLPGKSVQSRVNLAKGKDRTNCVTAYAARPEEEEERGGKWVLQDVCTNPCESTIAYAAIDAAALQPVIAGHDSSGVHLLPCGFISVMPDGLESKPAVITASRRGGEASGAGSLVTVAFQVPASPSAAAATLSPDSVEAVTVLVSSTLRNIRKALGCDSCEEEF.

Positions 26 to 104 are disordered; the sequence is VFGRKNGPAA…RRKNYHRHTA (79 aa). Basic residues predominate over residues 92 to 101; it reads KKRRRKNYHR. Positions 95-154 form a DNA-binding region, homeobox; it reads RRKNYHRHTAEQIRIMEALFKESPHPDERQRQQVSKQLGLSARQVKFWFQNRRTQIKAVQ. Positions 149–182 form a coiled coil; sequence QIKAVQERHENSLLKSELEKLQDEHRAMRELAKK. The segment at 265-296 is disordered; sequence KSAADGIASPPCSASAGAMQTNSRSPPLHDHD. Residues 302-541 enclose the START domain; that stretch reads HDDDKPRILE…LQLQCERMVF (240 aa).

Belongs to the HD-ZIP homeobox family. Class IV subfamily.

The protein resides in the nucleus. Probable transcription factor. The chain is Homeobox-leucine zipper protein ROC9 (ROC9) from Oryza sativa subsp. japonica (Rice).